We begin with the raw amino-acid sequence, 429 residues long: 3-phosphoshikimate 1-carboxyvinyltransferase (429 aa).

3 residues coordinate 3-phosphoshikimate: Lys-20, Ser-21, and Arg-25. A phosphoenolpyruvate-binding site is contributed by Lys-20. 2 residues coordinate phosphoenolpyruvate: Gly-89 and Arg-118. Residues Ser-164, Ser-165, Gln-166, Ser-192, Asp-311, and Lys-338 each contribute to the 3-phosphoshikimate site. Phosphoenolpyruvate is bound at residue Gln-166. The active-site Proton acceptor is the Asp-311. Phosphoenolpyruvate-binding residues include Arg-342 and Arg-384.

The protein belongs to the EPSP synthase family. As to quaternary structure, monomer.

It localises to the cytoplasm. It carries out the reaction 3-phosphoshikimate + phosphoenolpyruvate = 5-O-(1-carboxyvinyl)-3-phosphoshikimate + phosphate. It participates in metabolic intermediate biosynthesis; chorismate biosynthesis. Catalyzes the transfer of the enolpyruvyl moiety of phosphoenolpyruvate (PEP) to the 5-hydroxyl of shikimate-3-phosphate (S3P) to produce enolpyruvyl shikimate-3-phosphate and inorganic phosphate. This is 3-phosphoshikimate 1-carboxyvinyltransferase from Methanococcus maripaludis (strain C5 / ATCC BAA-1333).